The sequence spans 513 residues: GMP synthase [glutamine-hydrolyzing] (513 aa).

In terms of domain architecture, Glutamine amidotransferase type-1 spans 3–200 (SVLVLDFGSQ…LINIAGIRPD (198 aa)). C80 functions as the Nucleophile in the catalytic mechanism. Catalysis depends on residues H174 and E176. One can recognise a GMPS ATP-PPase domain in the interval 201–388 (WSSKSFIEHQ…LGIPEDILMR (188 aa)). 228 to 234 (SGGVDST) is a binding site for ATP.

As to quaternary structure, homodimer.

The catalysed reaction is XMP + L-glutamine + ATP + H2O = GMP + L-glutamate + AMP + diphosphate + 2 H(+). The protein operates within purine metabolism; GMP biosynthesis; GMP from XMP (L-Gln route): step 1/1. Its function is as follows. Catalyzes the synthesis of GMP from XMP. In Chlorobium luteolum (strain DSM 273 / BCRC 81028 / 2530) (Pelodictyon luteolum), this protein is GMP synthase [glutamine-hydrolyzing].